A 456-amino-acid polypeptide reads, in one-letter code: Transcription factor bHLH62 (456 aa).

A compositionally biased stretch (polar residues) spans 159-185 (RTNSPFPINNEPPITTNEKMPRVSSSP). The disordered stretch occupies residues 159-254 (RTNSPFPINN…KTKSIDPYKD (96 aa)). Residues 223-254 (KEIEEKEDSDPKRCKKSEENGDKTKSIDPYKD) show a composition bias toward basic and acidic residues. A bHLH domain is found at 264–314 (QATDSHSLAERVRREKISERMKLLQDLVPGCNKVTGKALMLDEIINYVQSL).

In terms of assembly, homodimer. Expressed constitutively in roots, leaves, stems, and flowers.

The protein resides in the nucleus. The polypeptide is Transcription factor bHLH62 (BHLH62) (Arabidopsis thaliana (Mouse-ear cress)).